A 210-amino-acid polypeptide reads, in one-letter code: Pyridoxine/pyridoxamine 5'-phosphate oxidase (210 aa).

Substrate contacts are provided by residues 7-10 (RQSY) and K65. Residues 60–65 (RIVLIK), 75–76 (FT), R81, K82, and Q104 each bind FMN. Y122, R126, and S130 together coordinate substrate. FMN is bound by residues 139–140 (QS) and W182. A substrate-binding site is contributed by 188–190 (RLH). FMN is bound at residue R192.

This sequence belongs to the pyridoxamine 5'-phosphate oxidase family. In terms of assembly, homodimer. Requires FMN as cofactor.

It catalyses the reaction pyridoxamine 5'-phosphate + O2 + H2O = pyridoxal 5'-phosphate + H2O2 + NH4(+). It carries out the reaction pyridoxine 5'-phosphate + O2 = pyridoxal 5'-phosphate + H2O2. It participates in cofactor metabolism; pyridoxal 5'-phosphate salvage; pyridoxal 5'-phosphate from pyridoxamine 5'-phosphate: step 1/1. Its pathway is cofactor metabolism; pyridoxal 5'-phosphate salvage; pyridoxal 5'-phosphate from pyridoxine 5'-phosphate: step 1/1. Catalyzes the oxidation of either pyridoxine 5'-phosphate (PNP) or pyridoxamine 5'-phosphate (PMP) into pyridoxal 5'-phosphate (PLP). The polypeptide is Pyridoxine/pyridoxamine 5'-phosphate oxidase (Bordetella avium (strain 197N)).